Here is a 79-residue protein sequence, read N- to C-terminus: M-myrmicitoxin(01)-Tb1a (79 aa).

Positions Met1–Ala26 are cleaved as a signal peptide. A propeptide spanning residues Lys27–Ala56 is cleaved from the precursor. Val76 carries the valine amide modification.

This sequence belongs to the formicidae venom precursor-01 superfamily. Post-translationally, the C-terminal amidation is important for antimicrobial activity, since a non-amidated synthetic peptide shows a reduced antimicrobial activity (2-20-fold depending on the strain tested). The amidation may play a positive role in the peptide conformation, since amidated peptide shows an increase of about 5% of helical content. In terms of tissue distribution, expressed by the venom gland.

Its subcellular location is the secreted. The protein localises to the target cell membrane. Antimicrobial peptide that shows antimicrobial activities against all microorganisms tested with minimal inhibitory concentrations (MICs) values ranging from 0.45 to 97.5 umol/L. This peptide kills the microorganisms by permeabilizating the membranes. It shows a very weak hemolytic activity (HC(50)=325 umol/L) and weak cytotoxicity against human lymphocytes (LC(50)=67.8 umol/L). Gram-negative bacteria tested are E.coli (MIC=24.4 umol/L), C.sakazakii (MIC=5.8 umol/L), P.aeruginosa (MIC=8.7-12.2 umol/L), S.enterica (MIC=5.4 umol/L), and H.pylori (MIC=0.99-3.9 umol/L). Gram-positive bacteria tested are E.hirae (MIC=12.2 umol/L), S.aureus (MIC=3.0-6.4 umol/L), methicillin-resistant S.aureus (MRSA) (MIC=8.7 umol/L), S.xylosus (MIC=0.45-1.3 umol/L), and B.subtilis (MIC=24.4 umol/L). Fungi tested are A.niger (MIC=0.75 umol/L), C.albicans (MIC=17.3 umol/L), G.candidum (MIC=97.5 umol/L), and S.cerevisiae (MIC=6.1 umol/L). Finally the parasite tested is L.infantum (MIC=1.5 umol/L). The sequence is that of M-myrmicitoxin(01)-Tb1a from Tetramorium bicarinatum (Tramp ant).